A 188-amino-acid polypeptide reads, in one-letter code: Molybdopterin synthase catalytic subunit (188 aa).

Serine 20 is subject to Phosphoserine. Residues 143 to 144 (HR), lysine 159, and 166 to 168 (KKE) contribute to the substrate site.

It belongs to the MoaE family. MOCS2B subfamily. In terms of assembly, heterotetramer; composed of 2 small (MOCS2A) and 2 large (MOCS2B) subunits. Highest levels are found in heart and skeletal muscle. Lower levels are present in brain, kidney and pancreas. Very low levels are found in lung and peripheral blood leukocytes.

Its subcellular location is the cytoplasm. It localises to the cytosol. It catalyses the reaction 2 [molybdopterin-synthase sulfur-carrier protein]-C-terminal-Gly-aminoethanethioate + cyclic pyranopterin phosphate + H2O = molybdopterin + 2 [molybdopterin-synthase sulfur-carrier protein]-C-terminal Gly-Gly + 2 H(+). It functions in the pathway cofactor biosynthesis; molybdopterin biosynthesis. Catalytic subunit of the molybdopterin synthase complex, a complex that catalyzes the conversion of precursor Z into molybdopterin. Acts by mediating the incorporation of 2 sulfur atoms from thiocarboxylated MOCS2A into precursor Z to generate a dithiolene group. This chain is Molybdopterin synthase catalytic subunit, found in Homo sapiens (Human).